Here is a 249-residue protein sequence, read N- to C-terminus: Glucosamine-6-phosphate deaminase (249 aa).

Asp-67 acts as the Proton acceptor; for enolization step in catalysis. Catalysis depends on Asn-136, which acts as the For ring-opening step. The Proton acceptor; for ring-opening step role is filled by His-138. Glu-143 functions as the For ring-opening step in the catalytic mechanism.

This sequence belongs to the glucosamine/galactosamine-6-phosphate isomerase family. NagB subfamily.

The catalysed reaction is alpha-D-glucosamine 6-phosphate + H2O = beta-D-fructose 6-phosphate + NH4(+). Its pathway is amino-sugar metabolism; N-acetylneuraminate degradation; D-fructose 6-phosphate from N-acetylneuraminate: step 5/5. In terms of biological role, catalyzes the reversible isomerization-deamination of glucosamine 6-phosphate (GlcN6P) to form fructose 6-phosphate (Fru6P) and ammonium ion. The polypeptide is Glucosamine-6-phosphate deaminase (Clostridium botulinum (strain Alaska E43 / Type E3)).